The chain runs to 116 residues: U11-theraphotoxin-Hhn1c (116 aa).

The first 21 residues, M1–A21, serve as a signal peptide directing secretion. A propeptide spanning residues D22–R74 is cleaved from the precursor. The segment at E61–D83 is disordered. 3 disulfides stabilise this stretch: C75-C90, C82-C95, and C89-C110.

Belongs to the neurotoxin 14 (magi-1) family. 01 (HNTX-16) subfamily. In terms of tissue distribution, expressed by the venom gland.

The protein resides in the secreted. In terms of biological role, probable ion channel inhibitor. In Cyriopagopus hainanus (Chinese bird spider), this protein is U11-theraphotoxin-Hhn1c.